Consider the following 91-residue polypeptide: UPF0358 protein Sca_0738 (91 aa).

The protein belongs to the UPF0358 family.

The chain is UPF0358 protein Sca_0738 from Staphylococcus carnosus (strain TM300).